We begin with the raw amino-acid sequence, 480 residues long: Immune evasion protein OPG047 (480 aa).

Positions 10 to 90 constitute a BTB domain; the sequence is CKNILALSMT…SYTGKVYIDS (81 aa). The region spanning 125–223 is the BACK domain; sequence CVECYMMGIE…NYLSPRGINN (99 aa). Kelch repeat units follow at residues 273 to 319, 320 to 363, 365 to 408, 410 to 447, and 448 to 480; these read VVYL…PANN, KLYV…SINN, IYVM…VFGR, LFLVGRNAEFYCESSNTWTLIDDPIYPRDNPELIIVDN, and KLLLIGGFYRESYIDTIEVYNHHTYSWNIWDGK.

It belongs to the orthopoxvirus OPG047 family.

Its function is as follows. Might have a role in the suppression of host immune response. The sequence is that of Immune evasion protein OPG047 (OPG047) from Vaccinia virus (strain Western Reserve) (VACV).